The chain runs to 698 residues: UvrABC system protein B (698 aa).

Positions 28 to 414 (RRILAGERDV…SGGEFVEQVI (387 aa)) constitute a Helicase ATP-binding domain. 41–48 (GATGTGKS) is an ATP binding site. The Beta-hairpin motif lies at 94–117 (YYDYYQPEAYIAQTDTYIEKDSSI). Residues 432-598 (QIDDLIGEIR…PLRKKIADIL (167 aa)) enclose the Helicase C-terminal domain. The disordered stretch occupies residues 609-629 (DTVQVGGSGRNVSRGRRAQSE). Residues 653–688 (ADLIKDLTAQMMAAASDLQFELAARFRDEIADLKKE) form the UVR domain.

The protein belongs to the UvrB family. Forms a heterotetramer with UvrA during the search for lesions. Interacts with UvrC in an incision complex.

The protein localises to the cytoplasm. In terms of biological role, the UvrABC repair system catalyzes the recognition and processing of DNA lesions. A damage recognition complex composed of 2 UvrA and 2 UvrB subunits scans DNA for abnormalities. Upon binding of the UvrA(2)B(2) complex to a putative damaged site, the DNA wraps around one UvrB monomer. DNA wrap is dependent on ATP binding by UvrB and probably causes local melting of the DNA helix, facilitating insertion of UvrB beta-hairpin between the DNA strands. Then UvrB probes one DNA strand for the presence of a lesion. If a lesion is found the UvrA subunits dissociate and the UvrB-DNA preincision complex is formed. This complex is subsequently bound by UvrC and the second UvrB is released. If no lesion is found, the DNA wraps around the other UvrB subunit that will check the other stand for damage. The polypeptide is UvrABC system protein B (Mycobacterium leprae (strain TN)).